The following is a 164-amino-acid chain: Nucleotide-binding protein Helmi_22490 (164 aa).

The protein belongs to the YajQ family.

Nucleotide-binding protein. The protein is Nucleotide-binding protein Helmi_22490 of Heliobacterium modesticaldum (strain ATCC 51547 / Ice1).